Consider the following 258-residue polypeptide: Trans-aconitate 2-methyltransferase (258 aa).

Belongs to the methyltransferase superfamily. Tam family.

It localises to the cytoplasm. The enzyme catalyses trans-aconitate + S-adenosyl-L-methionine = (E)-3-(methoxycarbonyl)pent-2-enedioate + S-adenosyl-L-homocysteine. Its function is as follows. Catalyzes the S-adenosylmethionine monomethyl esterification of trans-aconitate. The sequence is that of Trans-aconitate 2-methyltransferase from Yersinia pestis bv. Antiqua (strain Antiqua).